Here is a 203-residue protein sequence, read N- to C-terminus: Nudix hydrolase 12, mitochondrial (203 aa).

Residues 18 to 166 (NFRLVSGCIP…WMQRALEEFL (149 aa)) enclose the Nudix hydrolase domain. The Nudix box signature appears at 66 to 87 (GGWEDDETVLEAASREAIEEAG). Mg(2+) contacts are provided by Glu-81 and Glu-85.

It belongs to the Nudix hydrolase family. The cofactor is Mg(2+). It depends on Mn(2+) as a cofactor. In terms of tissue distribution, expressed in roots, leaves, stems and inflorescences.

The protein resides in the mitochondrion. In terms of biological role, probably mediates the hydrolysis of some nucleoside diphosphate derivatives. The sequence is that of Nudix hydrolase 12, mitochondrial (NUDT12) from Arabidopsis thaliana (Mouse-ear cress).